The chain runs to 442 residues: Serum response factor-binding protein 1 (442 aa).

2 coiled-coil regions span residues 55–77 (EDAL…AMKE) and 118–140 (LLKR…RQNA). Disordered regions lie at residues 137 to 336 (RQNA…LETH) and 358 to 442 (FHSL…TFDD). 2 stretches are compositionally biased toward basic and acidic residues: residues 149–159 (ASKESQCEDIP) and 167–188 (ESQH…DPTT). Residue lysine 202 forms a Glycyl lysine isopeptide (Lys-Gly) (interchain with G-Cter in SUMO2) linkage. A Phosphoserine modification is found at serine 215. Residues 237–247 (GNHSQGKASTR) show a composition bias toward polar residues. A compositionally biased stretch (acidic residues) spans 266–278 (VSEEEKEYFDDST). Serine 277, serine 292, and serine 294 each carry phosphoserine. A Glycyl lysine isopeptide (Lys-Gly) (interchain with G-Cter in SUMO2) cross-link involves residue lysine 329. Phosphoserine is present on serine 362. A compositionally biased stretch (basic and acidic residues) spans 367–382 (SRRDPREQAPKNKAPD).

As to quaternary structure, interacts with SRF. Forms complexes with SRF and SRF cofactors ARID2, MYOCD and NKX2-5. Interacts with the N-terminus of SLC2A4.

It localises to the cytoplasm. Its subcellular location is the perinuclear region. Its function is as follows. May be involved in regulating transcriptional activation of cardiac genes during the aging process. May play a role in biosynthesis and/or processing of SLC2A4 in adipose cells. The chain is Serum response factor-binding protein 1 from Rattus norvegicus (Rat).